Here is a 219-residue protein sequence, read N- to C-terminus: uncharacterized protein (219 aa).

The signal sequence occupies residues 1–17 (MFKKIIILFLGIFLLSS). C18 is lipidated: N-palmitoyl cysteine. Residue C18 is the site of S-diacylglycerol cysteine attachment. Residues 110-136 (KAESNATQSNNDMTLSKANKKVRKDDS) form a disordered region. Over residues 112–126 (ESNATQSNNDMTLSK) the composition is skewed to polar residues. The stretch at 137 to 165 (YKEKKIEEELNQIKAMLRETKRDITKYTC) forms a coiled coil.

The protein localises to the cell membrane. This is an uncharacterized protein from Rickettsia prowazekii (strain Madrid E).